A 610-amino-acid polypeptide reads, in one-letter code: DNA mismatch repair protein MutL (610 aa).

This sequence belongs to the DNA mismatch repair MutL/HexB family.

Its function is as follows. This protein is involved in the repair of mismatches in DNA. It is required for dam-dependent methyl-directed DNA mismatch repair. May act as a 'molecular matchmaker', a protein that promotes the formation of a stable complex between two or more DNA-binding proteins in an ATP-dependent manner without itself being part of a final effector complex. This chain is DNA mismatch repair protein MutL, found in Rickettsia peacockii (strain Rustic).